Here is a 75-residue protein sequence, read N- to C-terminus: SPbeta prophage-derived uncharacterized protein YomT (75 aa).

In Bacillus subtilis (strain 168), this protein is SPbeta prophage-derived uncharacterized protein YomT (yomT).